The chain runs to 405 residues: LanC-like protein GCL2 (405 aa).

Zn(2+) is bound by residues cysteine 278, cysteine 323, and histidine 324.

It belongs to the LanC-like protein family.

May play a role in signaling. May be not involved in abscisic acid (ABA) signaling. The polypeptide is LanC-like protein GCL2 (GCL2) (Arabidopsis thaliana (Mouse-ear cress)).